The following is a 365-amino-acid chain: Iron-sulfur cluster assembly protein SufC (365 aa).

An ABC transporter domain is found at 118–364; it reads LEINDLHAIE…ESDGYAQFVE (247 aa). An ATP-binding site is contributed by 152–159; sequence GRNGSGKS.

The protein belongs to the ABC transporter superfamily. Ycf16 family. Component of a complex composed of SufB, SufC and SufD in a stoichiometric ratio of 1:2:1. Interacts with SufB. Interacts with SufD; the interaction enhances the ATPase activity of SufC.

The protein localises to the plastid. It is found in the apicoplast. It catalyses the reaction ATP + H2O = ADP + phosphate + H(+). It functions in the pathway cofactor biosynthesis; iron-sulfur cluster biosynthesis. Functionally, participates in the sulfur mobilization (SUF) pathway for iron-sulfur (Fe-S) cluster biogenesis. As part of a complex consisting of SufB-SufC(2)-SufD, involved in assembly of [4Fe-4S] clusters. Exhibits ATPase activity. This chain is Iron-sulfur cluster assembly protein SufC, found in Plasmodium berghei (strain Anka).